A 247-amino-acid polypeptide reads, in one-letter code: Segregation and condensation protein A (247 aa).

This sequence belongs to the ScpA family. As to quaternary structure, component of a cohesin-like complex composed of ScpA, ScpB and the Smc homodimer, in which ScpA and ScpB bind to the head domain of Smc. The presence of the three proteins is required for the association of the complex with DNA.

It localises to the cytoplasm. Participates in chromosomal partition during cell division. May act via the formation of a condensin-like complex containing Smc and ScpB that pull DNA away from mid-cell into both cell halves. The polypeptide is Segregation and condensation protein A (Bacillus cereus (strain 03BB102)).